The following is a 328-amino-acid chain: Fructokinase-2 (328 aa).

The protein belongs to the carbohydrate kinase PfkB family.

It catalyses the reaction D-fructose + ATP = D-fructose 6-phosphate + ADP + H(+). It participates in glycan biosynthesis; starch biosynthesis. May play an important role in maintaining the flux of carbon towards starch formation. The sequence is that of Fructokinase-2 (FRK2) from Solanum habrochaites (Wild tomato).